The sequence spans 56 residues: uncharacterized protein (56 aa).

This is an uncharacterized protein from Streptomyces lividans.